The chain runs to 341 residues: Probable alcohol acetyltransferase (341 aa).

Residues 1-40 constitute a mitochondrion transit peptide; sequence MFASRILRNSAQTLKTELPHKETIKMAYDLHKPRSTAIRH. In terms of domain architecture, AB hydrolase-1 spans 48 to 301; sequence PILFLHGIFG…NSNHDILDQR (254 aa). Active-site charge relay system residues include S121, D145, and H295.

This sequence belongs to the AB hydrolase superfamily.

The protein localises to the mitochondrion. Probable alcohol acetyltransferase that uses acetyl-CoA to synthesize acetate esters from various alcohols. Not involved in the synthesis of ethyl acetate. The chain is Probable alcohol acetyltransferase (EAT2) from Wickerhamomyces anomalus (strain ATCC 58044 / CBS 1984 / NCYC 433 / NRRL Y-366-8) (Yeast).